Consider the following 1861-residue polypeptide: Amylopullulanase (1861 aa).

Residues 1 to 35 (MNKKLFTNRFISFNMSLLLVLTAVFSSIPLHSVHA) form the signal peptide. Residues D248, N250, D288, D343, N401, D403, N406, D407, and D453 each contribute to the Ca(2+) site. H526 and R626 together coordinate substrate. D628 (nucleophile) is an active-site residue. The active-site Proton donor is E657. Substrate is bound by residues 733–734 (HD), D793, and R797. 2 Fibronectin type-III domains span residues 929 to 1021 (APQA…AYPI) and 1158 to 1252 (KPTA…VVPI). The region spanning 1246-1354 (KPDVVPIKVI…INDTVYRWRD (109 aa)) is the CBM20 domain. Positions 1448–1486 (QENNSGSGTGNNNTSTSGSNSSSTGSGSTGSTSITSNIS) are disordered. Residues 1450 to 1486 (NNSGSGTGNNNTSTSGSNSSSTGSGSTGSTSITSNIS) are compositionally biased toward low complexity. SLH domains follow at residues 1677–1740 (EYDK…YSGE), 1741–1799 (FSDV…KEEN), and 1802–1861 (ATTF…SGNI).

This sequence belongs to the glycosyl hydrolase 13 family. It depends on Ca(2+) as a cofactor. In terms of processing, glycosylated.

The protein localises to the secreted. The protein resides in the cell wall. The enzyme catalyses Endohydrolysis of (1-&gt;4)-alpha-D-glucosidic linkages in polysaccharides containing three or more (1-&gt;4)-alpha-linked D-glucose units.. It carries out the reaction Hydrolysis of (1-&gt;6)-alpha-D-glucosidic linkages in pullulan, amylopectin and glycogen, and in the alpha- and beta-limit dextrins of amylopectin and glycogen.. The sequence is that of Amylopullulanase (amyB) from Thermoanaerobacterium thermosulfurigenes (Clostridium thermosulfurogenes).